The chain runs to 661 residues: Ubiquitin carboxyl-terminal hydrolase 25 (661 aa).

Positions 24–335 (LGLRNLGNTC…KAYILFFSRS (312 aa)) constitute a USP domain. Cysteine 33 serves as the catalytic Nucleophile. The Proton acceptor role is filled by histidine 294. Disordered stretches follow at residues 387 to 406 (GNLA…RAEQ) and 449 to 558 (FHQD…LCSS). The segment covering 449 to 461 (FHQDENIAPKANK) has biased composition (basic and acidic residues). Polar residues-rich tracts occupy residues 462 to 475 (ENSV…VNSG) and 545 to 558 (NGVS…LCSS).

Belongs to the peptidase C19 family.

It catalyses the reaction Thiol-dependent hydrolysis of ester, thioester, amide, peptide and isopeptide bonds formed by the C-terminal Gly of ubiquitin (a 76-residue protein attached to proteins as an intracellular targeting signal).. Functionally, recognizes and hydrolyzes the peptide bond at the C-terminal Gly of ubiquitin. Involved in the processing of poly-ubiquitin precursors as well as that of ubiquitinated proteins. The protein is Ubiquitin carboxyl-terminal hydrolase 25 (UBP25) of Arabidopsis thaliana (Mouse-ear cress).